A 1394-amino-acid chain; its full sequence is DNA-directed RNA polymerase subunit beta (1394 aa).

It belongs to the RNA polymerase beta chain family. The RNAP catalytic core consists of 2 alpha, 1 beta, 1 beta' and 1 omega subunit. When a sigma factor is associated with the core the holoenzyme is formed, which can initiate transcription.

It carries out the reaction RNA(n) + a ribonucleoside 5'-triphosphate = RNA(n+1) + diphosphate. Functionally, DNA-dependent RNA polymerase catalyzes the transcription of DNA into RNA using the four ribonucleoside triphosphates as substrates. This chain is DNA-directed RNA polymerase subunit beta, found in Anaplasma phagocytophilum (Ehrlichia phagocytophila).